A 507-amino-acid polypeptide reads, in one-letter code: ATP synthase subunit alpha (507 aa).

169-176 serves as a coordination point for ATP; sequence GDRQTGKT.

This sequence belongs to the ATPase alpha/beta chains family. As to quaternary structure, F-type ATPases have 2 components, CF(1) - the catalytic core - and CF(0) - the membrane proton channel. CF(1) has five subunits: alpha(3), beta(3), gamma(1), delta(1), epsilon(1). CF(0) has three main subunits: a(1), b(2) and c(9-12). The alpha and beta chains form an alternating ring which encloses part of the gamma chain. CF(1) is attached to CF(0) by a central stalk formed by the gamma and epsilon chains, while a peripheral stalk is formed by the delta and b chains.

It localises to the cell membrane. The catalysed reaction is ATP + H2O + 4 H(+)(in) = ADP + phosphate + 5 H(+)(out). Produces ATP from ADP in the presence of a proton gradient across the membrane. The alpha chain is a regulatory subunit. The polypeptide is ATP synthase subunit alpha (Desulforudis audaxviator (strain MP104C)).